The following is a 459-amino-acid chain: Cysteine--tRNA ligase (459 aa).

Position 31 (C31) interacts with Zn(2+). The 'HIGH' region signature appears at 33 to 43; it reads PTVYDNPHIGN. Zn(2+)-binding residues include C216, H241, and E245. The short motif at 274–278 is the 'KMSKS' region element; sequence KMSKS. K277 is an ATP binding site.

This sequence belongs to the class-I aminoacyl-tRNA synthetase family. In terms of assembly, monomer. Requires Zn(2+) as cofactor.

The protein resides in the cytoplasm. It catalyses the reaction tRNA(Cys) + L-cysteine + ATP = L-cysteinyl-tRNA(Cys) + AMP + diphosphate. This chain is Cysteine--tRNA ligase, found in Rickettsia massiliae (strain Mtu5).